A 310-amino-acid chain; its full sequence is Cytosolic Fe-S cluster assembly factor Nubp1 homolog (310 aa).

[4Fe-4S] cluster-binding residues include Cys8, Cys22, Cys25, and Cys31. ATP is bound at residue 62–69 (GKGGVGKS). 2 residues coordinate [4Fe-4S] cluster: Cys239 and Cys242.

It belongs to the Mrp/NBP35 ATP-binding proteins family. NUBP1/NBP35 subfamily. In terms of assembly, heterotetramer of 2 Nubp1 and 2 Nubp2 chains. It depends on [4Fe-4S] cluster as a cofactor.

The protein resides in the cytoplasm. Functionally, component of the cytosolic iron-sulfur (Fe/S) protein assembly (CIA) machinery. Required for maturation of extramitochondrial Fe-S proteins. The Nubp1-Nubp2 heterotetramer forms a Fe-S scaffold complex, mediating the de novo assembly of an Fe-S cluster and its transfer to target apoproteins. This chain is Cytosolic Fe-S cluster assembly factor Nubp1 homolog, found in Drosophila ananassae (Fruit fly).